The following is a 331-amino-acid chain: Adenosine deaminase (331 aa).

Zn(2+) is bound by residues H12 and H14. Substrate contacts are provided by H14, D16, and G170. Zn(2+) is bound at residue H197. Residue E200 is the Proton donor of the active site. Zn(2+) is bound at residue D278. D279 is a substrate binding site.

Belongs to the metallo-dependent hydrolases superfamily. Adenosine and AMP deaminases family. Adenosine deaminase subfamily. It depends on Zn(2+) as a cofactor.

It catalyses the reaction adenosine + H2O + H(+) = inosine + NH4(+). The enzyme catalyses 2'-deoxyadenosine + H2O + H(+) = 2'-deoxyinosine + NH4(+). Catalyzes the hydrolytic deamination of adenosine and 2-deoxyadenosine. In Shewanella baltica (strain OS185), this protein is Adenosine deaminase.